The primary structure comprises 240 residues: MSWFLVLKCLLTVCIISHLSVSSTESYGCIRKTCFGGRCLHNTTRSCEFSKGCFSQLQEFAVPLLLLNRRVEQRGCSEDNCTELAFSATLGIDWMFSYNHQCCYSEQCNNKPINVSPLSLQPNGVECPTCYSELGTCRPVSLKCTGAQTTCVNVTGQGIREDFIKIHAMGCATQTACNLKNVIILNNIKIDTSCVSGSPPLRYSPSLSTDQKTSSATAPTLCLLAAVLPAIMVMESFSEL.

An N-terminal signal peptide occupies residues 1–26 (MSWFLVLKCLLTVCIISHLSVSSTES). N-linked (GlcNAc...) asparagine glycosylation occurs at asparagine 42. 5 disulfide bridges follow: cysteine 47–cysteine 76, cysteine 81–cysteine 102, cysteine 103–cysteine 108, cysteine 127–cysteine 151, and cysteine 144–cysteine 171. A glycan (N-linked (GlcNAc...) asparagine) is linked at asparagine 153.

It belongs to the CNF-like-inhibitor family. N-glycosylated. As to expression, expressed abundantly in bone, including the lengthening growth plate where cartilage is remodeled into bone.

The protein resides in the secreted. Functionally, may play a novel role in the growth or remodeling of bone. This chain is Protein RoBo-1, found in Rattus norvegicus (Rat).